The chain runs to 104 residues: COX assembly mitochondrial protein 1 (104 aa).

The 43-residue stretch at 10-52 folds into the CHCH domain; the sequence is QKQCADLIRALEECHKSFGKFFGECNTIKYELKACLTKDRNDK. 2 consecutive short sequence motifs (cx9C motif) follow at residues 13 to 23 and 34 to 44; these read CADLIRALEEC and CNTIKYELKAC. Intrachain disulfides connect cysteine 13/cysteine 44 and cysteine 23/cysteine 34.

The protein belongs to the CMC family.

The protein localises to the mitochondrion inner membrane. Its function is as follows. Required for mitochondrial cytochrome c oxidase (COX) assembly and respiration. The protein is COX assembly mitochondrial protein 1 (cmc1) of Schizosaccharomyces pombe (strain 972 / ATCC 24843) (Fission yeast).